A 458-amino-acid polypeptide reads, in one-letter code: Kelch repeat and BTB domain-containing protein 13 (458 aa).

The BTB domain maps to 7–74 (TLVQVWVGGQ…LRGDRPALAA (68 aa)). Kelch repeat units follow at residues 159 to 209 (AVST…TLGN), 210 to 258 (KLYI…GFDG), 259 to 305 (RLYA…QACG), 307 to 350 (LFVC…VAHR), and 352 to 400 (SLYV…VVRG).

Component of the BCR(KBTBD13) E3 ubiquitin ligase complex, at least composed of CUL3 and KBTBD13 and RBX1. Interacts with CUL3. Post-translationally, autoubiquitinated. As to expression, expressed in skeletal muscle.

The protein resides in the cytoplasm. It functions in the pathway protein modification; protein ubiquitination. In terms of biological role, substrate-specific adapter of a BCR (BTB-CUL3-RBX1) E3 ubiquitin ligase complex. This is Kelch repeat and BTB domain-containing protein 13 (KBTBD13) from Homo sapiens (Human).